A 121-amino-acid polypeptide reads, in one-letter code: uncharacterized protein (121 aa).

3 consecutive transmembrane segments (helical) span residues 2-22 (VFVT…IYTI), 42-62 (FICI…YILF), and 89-109 (IFFA…LSIF).

It localises to the membrane. This is an uncharacterized protein from Saccharomyces cerevisiae (strain ATCC 204508 / S288c) (Baker's yeast).